The sequence spans 908 residues: Disease resistance protein RPP8 (908 aa).

Residues D15–R57 adopt a coiled-coil conformation. The NB-ARC domain maps to R146–I459. G192–T199 lines the ATP pocket. LRR repeat units lie at residues L575 to L600, I601 to L623, M648 to N673, M693 to E718, L722 to H746, I748 to P770, L793 to Q820, M842 to T867, and K882 to N905.

It belongs to the disease resistance NB-LRR family. RPP8/HRT subfamily. As to quaternary structure, interacts with the NAC protein TIP. Interacts with MORC1/CRT1. Interacts with COP1 and is subsequently degraded in a 26s proteasome dependent manner. In terms of tissue distribution, mostly expressed in leaves, and, to a lower extent, in roots.

The protein resides in the cell membrane. Functionally, disease resistance protein. Resistance proteins guard the plant against pathogens that contain an appropriate avirulence protein via an indirect interaction with this avirulence protein. That triggers a defense system including the hypersensitive response, which restricts the pathogen growth. The interaction with TIP (TCV-interacting protein) may be essential for the recognition of the avirulence proteins, and the triggering of the defense response. Triggers resistance to turnip crinkle virus (TCV) via a SAG101-dependent pathway. The polypeptide is Disease resistance protein RPP8 (RPP8) (Arabidopsis thaliana (Mouse-ear cress)).